Here is a 309-residue protein sequence, read N- to C-terminus: Aromatic prenyltransferase (309 aa).

It belongs to the aromatic prenyltransferase family.

Its function is as follows. Prenyltransferase that attaches isoprenoid moieties to carbon atoms of aromatic substrates in an enzyme-catalyzed Friedel-Crafts reaction. Shows specificity for dimethylallyl diphosphate (DMAPP) and does not accept geranyl diphosphate (GPP) or isopentenyl diphosphate (IPP). Prenylates the artificial substrate 2,7-dihydroxynaphthalene (2,7-DHN), as well as dihydrophenazine-1-carboxylic acid and 4-hydroxybenzoic acid at lower levels. Only traces of products are detected with aspulvinone E or flaviolin as substrates; and no product is formed with L-tryptophan, L-tyrosine, or 4-hydroxyphenylpyruvate. Ptf seems no to be involved in the prenylation reaction in the biosynthesis of aspulvinone H and J and the physiological function of ptf remains unknown. This is Aromatic prenyltransferase from Sclerotinia sclerotiorum (strain ATCC 18683 / 1980 / Ss-1) (White mold).